We begin with the raw amino-acid sequence, 476 residues long: MPMSLRLHNNLTRRVEPFTPLDPSSPTLYVCGPTVYNYAHIGNARGPVVFDVLAALLRRRYGALRYARNITDVDDKINAAAQAQGVPISTITDRFAAIYRQDMAALGVVPPDIEPEATAHIPQIVAMIEQLIANGHAYAAEGHVLFSVSSFEDYGKLSRRDPDEMLAGARVDVAPYKRDPGDFVLWKPSSDELPGWESPWGRGRPGWHIECSAMAAAHLGPTIDIHAGGVDLQFPHHENEIAQSECAHGGATFARFWLHNGMLNFSGAKMSKSLGNIETVHDLIAKHPPEALRYALLSAHYRQPLDWSDGLIEQATNTLDRLYGTLRDLAALEACGSSGVEVSKTIPVEVESALQDDLNTPLALSVIASIASEARALRNELVHGGEPSARMSELHAVRAKLLGAGLALGLLQQDPAAWFSRGTDADDDARITALVQERSAAKKAKDFARADAIRKQLADEGIVLEDTPQGVRWKRA.

C31 provides a ligand contact to Zn(2+). Positions 33–43 (PTVYNYAHIGN) match the 'HIGH' region motif. Positions 211, 236, and 240 each coordinate Zn(2+). Positions 269–273 (KMSKS) match the 'KMSKS' region motif. K272 is a binding site for ATP.

The protein belongs to the class-I aminoacyl-tRNA synthetase family. Monomer. Zn(2+) is required as a cofactor.

It localises to the cytoplasm. It carries out the reaction tRNA(Cys) + L-cysteine + ATP = L-cysteinyl-tRNA(Cys) + AMP + diphosphate. The chain is Cysteine--tRNA ligase from Xanthomonas oryzae pv. oryzae (strain MAFF 311018).